The following is a 422-amino-acid chain: Phagosome assembly factor 1 (422 aa).

Belongs to the PHAF1 family. Interacts with BCAS3; the interaction is requrired for the association with the phagophore.

Its subcellular location is the cytoplasm. It localises to the preautophagosomal structure. Plays a regulatory role in autophagic activity. In complex with BCAS3, associates with the autophagosome formation site during both non-selective and selective autophagy. The protein is Phagosome assembly factor 1 (Phaf1) of Rattus norvegicus (Rat).